Reading from the N-terminus, the 140-residue chain is VapC ribonuclease Y4jK (140 aa).

Residues 2-135 form the PINc domain; sequence IVLDTNVISE…FEAAGLDIIN (134 aa). The Mg(2+) site is built by aspartate 5 and aspartate 104.

It belongs to the PINc/VapC protein family. Requires Mg(2+) as cofactor.

In terms of biological role, toxic component of a type II toxin-antitoxin (TA) system. An RNase. Involved in plasmid stability. In Sinorhizobium fredii (strain NBRC 101917 / NGR234), this protein is VapC ribonuclease Y4jK.